The chain runs to 328 residues: tRNA uridine(34) hydroxylase (328 aa).

The Rhodanese domain occupies Leu-130–Glu-224. Catalysis depends on Cys-184, which acts as the Cysteine persulfide intermediate.

The protein belongs to the TrhO family.

It carries out the reaction uridine(34) in tRNA + AH2 + O2 = 5-hydroxyuridine(34) in tRNA + A + H2O. Functionally, catalyzes oxygen-dependent 5-hydroxyuridine (ho5U) modification at position 34 in tRNAs. This Streptococcus pyogenes serotype M28 (strain MGAS6180) protein is tRNA uridine(34) hydroxylase.